The sequence spans 120 residues: Nitrogen regulatory protein GlnK3 (120 aa).

ADP is bound by residues Thr-40 and Gly-48–Gln-50. ATP contacts are provided by residues Thr-40 and Gly-48 to Gln-50. 2-oxoglutarate contacts are provided by residues Gly-48–Gly-52 and Lys-69. ADP is bound by residues Val-75 and Gly-98–Arg-101. ATP contacts are provided by residues Val-75 and Gly-98 to Arg-101. Position 98 (Gly-98) interacts with 2-oxoglutarate.

Belongs to the P(II) protein family. Homotrimer. Interacts and forms a complex with Amt3.

It localises to the cytoplasm. Its activity is regulated as follows. Activity is influenced by intracellular pools of the effector molecules ATP, ADP and 2-oxoglutarate. It senses the cellular nitrogen status through 2-oxoglutarate, and the energy level of the cell by binding both ATP and ADP with different affinities. ATP and 2-oxoglutarate prohibit binding to Amt3. ADP promotes the complex formation. Functionally, involved in the regulation of nitrogen metabolism. Regulates the activity of its targets by protein-protein interaction in response to the nitrogen status of the cell. Regulates the activity of the ammonia channel Amt3 via direct interaction. The sequence is that of Nitrogen regulatory protein GlnK3 from Archaeoglobus fulgidus (strain ATCC 49558 / DSM 4304 / JCM 9628 / NBRC 100126 / VC-16).